Reading from the N-terminus, the 282-residue chain is MQKKYYELFFIVEEQYKNLFLGFAFDLGIEAIEEKDNGIYIRSHESLEELSWALEIFAQKLTTTFNLNHKIISNLSLVEKENKDWIQEYKKGIKPILVDNVYIHTTWQEEKKNCINIKINPALAFGSGHHESTHSCVKFLQKFSKSKLRALDLGCGSGILGIIMAKFGCNVEICDTDELAIDSSLENARLNGVDFHKAWCGSIDKANGLYNLIVANIIADVILILEKDIKNHLEDNAILILSGILDKYSTRIKEKFQDLELIDEMQINEWCSFVYKNNKKDK.

S-adenosyl-L-methionine contacts are provided by Thr-133, Gly-154, Asp-175, and Asn-216.

It belongs to the methyltransferase superfamily. PrmA family.

It is found in the cytoplasm. It catalyses the reaction L-lysyl-[protein] + 3 S-adenosyl-L-methionine = N(6),N(6),N(6)-trimethyl-L-lysyl-[protein] + 3 S-adenosyl-L-homocysteine + 3 H(+). In terms of biological role, methylates ribosomal protein L11. In Campylobacter jejuni subsp. doylei (strain ATCC BAA-1458 / RM4099 / 269.97), this protein is Ribosomal protein L11 methyltransferase.